The sequence spans 418 residues: Pyruvate decarboxylase 1 (418 aa).

Residue H59 coordinates substrate. Positions 337-418 are thiamine pyrophosphate binding; sequence DSWFNCQKLK…IFLINNGGYT (82 aa). Positions 387, 414, and 416 each coordinate Mg(2+).

This sequence belongs to the TPP enzyme family. As to quaternary structure, homotetramer. A metal cation is required as a cofactor. It depends on thiamine diphosphate as a cofactor. In terms of tissue distribution, leaves.

The catalysed reaction is a 2-oxocarboxylate + H(+) = an aldehyde + CO2. The sequence is that of Pyruvate decarboxylase 1 (PDC1) from Nicotiana tabacum (Common tobacco).